The chain runs to 610 residues: L-galactono-1,4-lactone dehydrogenase, mitochondrial (610 aa).

The transit peptide at 1–35 (MLRSLLLRRSVGHSLGTLSPSSSTIRSSFSPHRTL) directs the protein to the mitochondrion. Residues 17-61 (TLSPSSSTIRSSFSPHRTLCTTGQTLTPPPPPPPRPPPPPPATAS) are disordered. Residues 19-30 (SPSSSTIRSSFS) are compositionally biased toward low complexity. A propeptide spans 36–101 (CTTGQTLTPP…AKHKKAQIFR (66 aa)) (removed in mature form). The span at 43–58 (TPPPPPPPRPPPPPPA) shows a compositional bias: pro residues. The chain crosses the membrane as a helical span at residues 68–84 (YAGYAALAIFSGVATYF). The region spanning 123–258 (TRNFNQPENL…TPAKGTIELS (136 aa)) is the FAD-binding PCMH-type domain.

The cofactor is FAD.

The protein localises to the mitochondrion membrane. The catalysed reaction is L-galactono-1,4-lactone + 4 Fe(III)-[cytochrome c] = L-dehydroascorbate + 4 Fe(II)-[cytochrome c] + 5 H(+). It carries out the reaction L-gulono-1,4-lactone + 2 Fe(III)-[cytochrome c] = L-ascorbate + 2 Fe(II)-[cytochrome c] + 3 H(+). Its pathway is cofactor biosynthesis; L-ascorbate biosynthesis. Its function is as follows. Involved in the biosynthesis of ascorbate. Catalyzes the final step of ascorbate biosynthesis. Uses L-galactono-1,4-lactone and L-gulono-1,4-lactone as substrates, but not D-galactono-1,4-lactone, D-gulono-1,4-lactone, L-mannono-1,4-lactone or D-galactonic acid. Also active with phenazine methosulfate and 1,4-benzoquinone as electron acceptors. Involved in the regulation of the accumulation of the mitochondrial respiratory complex I. Structural part of one of the plant-specific mitochondrial complex I assembly intermediates, lacking the whole distal (PD) module. Prevents the binding of the plant specific P1 protein (CPN60/HSP60), responsible for the linkage of the proximal (PP) to the distal (PD) module. The polypeptide is L-galactono-1,4-lactone dehydrogenase, mitochondrial (Arabidopsis thaliana (Mouse-ear cress)).